A 762-amino-acid polypeptide reads, in one-letter code: 1-phosphatidylinositol 4,5-bisphosphate phosphodiesterase delta-4 (762 aa).

The region spanning 16–124 is the PH domain; that stretch reads LLMQEGMPMR…WMRGLQLLVD (109 aa). The segment at 26 to 53 is substrate binding; sequence KVRSKSWKKLRYFRLQNDGMTVWHARQA. 3 consecutive EF-hand domains span residues 134–169, 170–205, and 206–237; these read RLDQ…MNVE, MDQE…LTKR, and AEVQ…EQKE. The Ca(2+) site is built by Asp147, Asn149, Asp151, Lys153, Glu158, Asp183, Ser185, Ser187, Thr189, and Glu194. The GBA motif lies at 213-243; the sequence is ESFSADGQKLTLLEFLDFLQEEQKERDCTSE. One can recognise a PI-PLC X-box domain in the interval 290-435; that stretch reads QDMTQPLNHY…LRRKILVKGK (146 aa). Residue His305 is part of the active site. The Ca(2+) site is built by Asn306, Glu335, and Asp337. His350 is a catalytic residue. Residue Glu384 coordinates Ca(2+). Substrate is bound by residues Lys433 and Lys435. Residues 443–471 are compositionally biased toward acidic residues; sequence LEYEEEEAEPELEESELALESQFETEPEP. The tract at residues 443-483 is disordered; the sequence is LEYEEEEAEPELEESELALESQFETEPEPQEQNLQNKDKKK. Ser457 bears the Phosphoserine mark. In terms of domain architecture, PI-PLC Y-box spans 493–609; that stretch reads LSSLVIYLKS…GYVLKPDFLR (117 aa). Substrate is bound by residues Ser522 and Arg549. One can recognise a C2 domain in the interval 609 to 736; the sequence is RDIQSSFHPE…QGYRHIHLLS (128 aa). Positions 650, 652, 676, 705, 706, and 707 each coordinate Ca(2+). A PDZ-binding motif is present at residues 731-734; the sequence is HIHL.

In terms of assembly, interacts with GRIP1. As to quaternary structure, interacts (via GBA motif) with guanine nucleotide-binding protein G(i) alpha subunit GNAI3 (inactive GDP-bound form); high-affinity interaction. Interacts (via GBA motif) with guanine nucleotide-binding protein G(i) alpha subunit GNAI3 (inactive GDP-bound form); low-affinity interaction. Ca(2+) is required as a cofactor. As to expression, highly expressed in skeletal muscle and kidney tissues, and at moderate level in intestinal tissue. Expressed in corneal epithelial cells.

It localises to the membrane. The protein localises to the nucleus. It is found in the cytoplasm. Its subcellular location is the endoplasmic reticulum. The catalysed reaction is a 1,2-diacyl-sn-glycero-3-phospho-(1D-myo-inositol-4,5-bisphosphate) + H2O = 1D-myo-inositol 1,4,5-trisphosphate + a 1,2-diacyl-sn-glycerol + H(+). It carries out the reaction a 1,2-diacyl-sn-glycero-3-phospho-(1D-myo-inositol) + H2O = 1D-myo-inositol 1-phosphate + a 1,2-diacyl-sn-glycerol + H(+). In terms of biological role, hydrolyzes the phosphatidylinositol 4,5-bisphosphate (PIP2) to generate 2 second messenger molecules diacylglycerol (DAG) and inositol 1,4,5-trisphosphate (IP3). DAG mediates the activation of protein kinase C (PKC), while IP3 releases Ca(2+) from intracellular stores. Required for acrosome reaction in sperm during fertilization, probably by acting as an important enzyme for intracellular Ca(2+) mobilization in the zona pellucida-induced acrosome reaction. May play a role in cell growth. Modulates the liver regeneration in cooperation with nuclear PKC. Overexpression up-regulates the Erk signaling pathway and proliferation. Its function is as follows. Acts as a non-receptor guanine nucleotide exchange factor which binds to and activates guanine nucleotide-binding protein (G-protein) alpha subunit GNAI3. In Homo sapiens (Human), this protein is 1-phosphatidylinositol 4,5-bisphosphate phosphodiesterase delta-4.